The chain runs to 256 residues: Triosephosphate isomerase (256 aa).

Position 12 to 14 (12 to 14) interacts with substrate; the sequence is NWK. The active-site Electrophile is the His99. Glu169 (proton acceptor) is an active-site residue. Substrate-binding positions include Gly175, Ser214, and 235 to 236; that span reads GG.

Belongs to the triosephosphate isomerase family. As to quaternary structure, homodimer.

The protein resides in the cytoplasm. It catalyses the reaction D-glyceraldehyde 3-phosphate = dihydroxyacetone phosphate. The protein operates within carbohydrate biosynthesis; gluconeogenesis. It participates in carbohydrate degradation; glycolysis; D-glyceraldehyde 3-phosphate from glycerone phosphate: step 1/1. In terms of biological role, involved in the gluconeogenesis. Catalyzes stereospecifically the conversion of dihydroxyacetone phosphate (DHAP) to D-glyceraldehyde-3-phosphate (G3P). This Rhizobium etli (strain ATCC 51251 / DSM 11541 / JCM 21823 / NBRC 15573 / CFN 42) protein is Triosephosphate isomerase.